An 868-amino-acid chain; its full sequence is DNA mismatch repair protein MutS (868 aa).

Gly-620 to Ser-627 is a binding site for ATP.

The protein belongs to the DNA mismatch repair MutS family.

Functionally, this protein is involved in the repair of mismatches in DNA. It is possible that it carries out the mismatch recognition step. This protein has a weak ATPase activity. The polypeptide is DNA mismatch repair protein MutS (Xylella fastidiosa (strain Temecula1 / ATCC 700964)).